A 338-amino-acid polypeptide reads, in one-letter code: MEREENIEIKNSFDYILNSVTGLIESRLLYILVKHKVPEVFEDGLPKTYQQVAEKTQTSPIGIYKLLRYFTTSIGLFEEDLNNLGTFKKTPKSSLFTSDKYATFVEWCNNDLAYNMMKSLDLSIETGEPQCHKSLGVNSWWDLIKKPGEEEFFKNAMKVSSSEAIESALKFIDFSPFKKIVDIGGSHGRFVCEILEKYPNSHGINFDLESFFNGAGELIKNPRLEHKSGNFFESVPEGDCYILKRILHDWKDEDCIKILETIGKSILPGGKVIIFDCIINPKNYNKGHLYLDVMMFHFFGSEEKTIKQFSNISDKAGFKIDKVVNEIPNYCLIISKKD.

S-adenosyl-L-methionine is bound by residues Gly184, Asp207, Asn230, Phe231, Lys244, and Arg245. The Proton acceptor role is filled by His248.

It belongs to the class I-like SAM-binding methyltransferase superfamily. Cation-independent O-methyltransferase family. COMT subfamily.

It carries out the reaction (3,5-dichloro-2,4,6-trihydroxyphenyl)hexan-1-one + S-adenosyl-L-methionine = 1-(3,5-dichloro-2,6-dihydroxy-4-methoxyphenyl)hexan-1-one + S-adenosyl-L-homocysteine + H(+). The sequence is that of O-methyltransferase 4 (omt4) from Dictyostelium discoideum (Social amoeba).